The primary structure comprises 201 residues: Large ribosomal subunit protein uL4 (201 aa).

Residues 45–73 (AQKTRAEVTGSGKKPWRQKGTGRARAGSV) are disordered.

It belongs to the universal ribosomal protein uL4 family. In terms of assembly, part of the 50S ribosomal subunit.

Functionally, one of the primary rRNA binding proteins, this protein initially binds near the 5'-end of the 23S rRNA. It is important during the early stages of 50S assembly. It makes multiple contacts with different domains of the 23S rRNA in the assembled 50S subunit and ribosome. In terms of biological role, forms part of the polypeptide exit tunnel. In Yersinia pseudotuberculosis serotype O:1b (strain IP 31758), this protein is Large ribosomal subunit protein uL4.